Here is a 729-residue protein sequence, read N- to C-terminus: Circadian input-output histidine kinase CikA (729 aa).

The tract at residues 1–169 (MPQPIFDRIL…QVTTQIRQSL (169 aa)) is N-terminal domain. The segment at 170-314 (ELPELLKIAV…VEFLTHLSQH (145 aa)) is GAF domain. The region spanning 366-587 (TMSHELRTPL…TFTVGLPAIS (222 aa)) is the Histidine kinase domain. Residue histidine 369 is modified to Phosphohistidine; by autocatalysis. Positions 613–729 (EGRIVLVSED…GLTSLATSAQ (117 aa)) are psR domain, binds KaiB.

This sequence in the N-terminal section; belongs to the phytochrome family. In terms of assembly, homodimer. Part of the circadian clock (KaiA, KaiB, KaiC, CikA, RpaA, SasA), the composition of which varies during the circadian cycle. KaiA and CikA compete for binding to KaiB(fs). The PsR domain binds the KaiB:KaiC CI complex but poorly to either protein alone. KaiA and CikA bind to the same region of the KaiB(fs) form and therefore compete.

It carries out the reaction ATP + protein L-histidine = ADP + protein N-phospho-L-histidine.. Its function is as follows. Functions in an input pathway to the Kai circadian clock. Senses oxidized quinones via its C-terminal pseudo-receiver domain, providing a link between cell metabolism and the clock. Affects the ratio of phosphorylated to unphosphorylated KaiC, binds quinones via its pseudo-receptor domain. Quinone-binding destabilizes the protein rapidly. Autophosphorylates, does not transfer the phosphate to its pseudo-receiver (PsR) domain. May play a role in cell division. Functionally, also functions in a two-component CikA/RpaA output pathway from the circadian clock, negatively regulating kaiBC expression independently of labA and of sasA. One of three clock output pathways. Dephosphorylates phospho-RpaA, enhanced by KaiB and KaiC, has only modest kinase activity on RpaA. This chain is Circadian input-output histidine kinase CikA, found in Thermosynechococcus vestitus (strain NIES-2133 / IAM M-273 / BP-1).